The primary structure comprises 183 residues: Cuticle protein 2 (183 aa).

The signal sequence occupies residues 1–15; the sequence is MKLIVVAALIGVCAG. The region spanning 58–121 is the Chitin-binding type R&amp;R domain; sequence SQGFQYVYDT…AQGAHLPTPP (64 aa).

This Lonomia obliqua (Moth) protein is Cuticle protein 2.